We begin with the raw amino-acid sequence, 337 residues long: MNSWDAGLAGLLVGTIGVSLLSNGLVLLCLLHSADIRRQAPALFTLNLTCGNLLCTVVNMPLTLAGVVAQRQPAGDRLCRLAAFLDTFLAANSMLSMAALSIDRWVAVVFPLSYRAKMRLRDAAFMVAYTWLHALTFPATALALSWLGFHQLYASCTLCSRRPDERLRFAVFTSAFHALSFLLSFIVLCFTYLKVLKVARFHCKRIDVITMQTLVLLVDIHPSVRERCLEEQKRRRQRATKKISTFIGTFLVCFAPYVITRLVELFSTAPIGSHWGVLSKCLAYSKAASDPFVYSLLRHQYRRSCKELLNRIFNRRSLHSVGLTGDSHSQNILPVSE.

The Extracellular portion of the chain corresponds to M1–G10. The chain crosses the membrane as a helical span at residues L11–L31. At H32–N47 the chain is on the cytoplasmic side. The chain crosses the membrane as a helical span at residues L48 to V68. Residues A69–L81 are Extracellular-facing. A disulfide bridge connects residues C79 and C156. The helical transmembrane segment at A82–I102 threads the bilayer. Residues D103–A123 lie on the Cytoplasmic side of the membrane. A helical transmembrane segment spans residues A124–L144. Topologically, residues S145–R168 are extracellular. Residues F169 to C189 traverse the membrane as a helical segment. Residues F190–T245 lie on the Cytoplasmic side of the membrane. A helical transmembrane segment spans residues F246–F266. Topologically, residues S267–G276 are extracellular. Residues V277–L297 traverse the membrane as a helical segment. At R298–E337 the chain is on the cytoplasmic side.

The protein belongs to the G-protein coupled receptor 1 family. Exclusively expressed in the brain. Prominent expression is detected throughout the entire neocortex at all rostrocaudal and dorsoventral levels. Strong expression is detected in olfactory and auditory sensory areas.

It is found in the cell membrane. Orphan receptor. Displays a significant level of constitutive activity. Its effect is mediated by G(s)-alpha protein that stimulate adenylate cyclase, resulting in an elevation of intracellular cAMP. The protein is G-protein coupled receptor 26 (Gpr26) of Mus musculus (Mouse).